Here is a 314-residue protein sequence, read N- to C-terminus: Dihydroorotate dehydrogenase (fumarate) (314 aa).

Residues Lys-46, 70–74, and Asn-130 contribute to the substrate site; that span reads NSMGL. Lys-46 is covalently cross-linked (Glycyl lysine isopeptide (Lys-Gly) (interchain with G-Cter in ubiquitin)). Position 46–47 (46–47) interacts with FMN; that stretch reads KS. Residue Asn-130 participates in FMN binding. The active-site Nucleophile is the Cys-133. FMN-binding residues include Lys-167 and Ile-195. 196 to 197 lines the substrate pocket; sequence NS. Residues Gly-224, 252-253, and 274-275 contribute to the FMN site; these read GG and GT.

Belongs to the dihydroorotate dehydrogenase family. Type 1 subfamily. As to quaternary structure, homodimer. The cofactor is FMN.

The protein localises to the cytoplasm. The enzyme catalyses (S)-dihydroorotate + fumarate = orotate + succinate. It functions in the pathway pyrimidine metabolism; UMP biosynthesis via de novo pathway. With respect to regulation, the activity is independent of the presence of oxygen. Its function is as follows. Catalyzes the conversion of dihydroorotate to orotate with fumarate as the electron acceptor. Molecular oxygen can replace fumarate in vitro. Does not use oxaloacetate or NAD or NADP as electron acceptors. The chain is Dihydroorotate dehydrogenase (fumarate) (URA1) from Saccharomyces cerevisiae (strain ATCC 204508 / S288c) (Baker's yeast).